We begin with the raw amino-acid sequence, 249 residues long: MASVNVDFEQAGELKIGQVGIANLRVRTLDVSRLVQEMRERVTRAPKLFGRAAVILDFGGLSQVPDLATAKALLEGLRDAGVLPVALAYGTSEIDLLSQQLGVPLLAKFRAQYEPTAVSPPPPPPPPPARAEPAPPAARPAPGRMQRTAVRSGQQLYAENCDLTVLSTVGAGAEVIADGSIHIYGTLRGRALAGAQGNPDARIFCRDFHAELVAIAGHYKVLDDVPMDLRGKAVQVWLEQDQIKIAALD.

Residues 115-144 (PTAVSPPPPPPPPPARAEPAPPAARPAPGR) are disordered. Residues 118–139 (VSPPPPPPPPPARAEPAPPAAR) are compositionally biased toward pro residues.

Belongs to the MinC family. Interacts with MinD and FtsZ.

Functionally, cell division inhibitor that blocks the formation of polar Z ring septums. Rapidly oscillates between the poles of the cell to destabilize FtsZ filaments that have formed before they mature into polar Z rings. Prevents FtsZ polymerization. The chain is Probable septum site-determining protein MinC from Xanthomonas axonopodis pv. citri (strain 306).